Reading from the N-terminus, the 254-residue chain is Coproheme decarboxylase (254 aa).

Residues Arg136, 150 to 154 (YPMDK), His177, Gln190, and Ser228 each bind Fe-coproporphyrin III. Residue Tyr150 is part of the active site.

This sequence belongs to the ChdC family. Type 1 subfamily. Fe-coproporphyrin III serves as cofactor.

The catalysed reaction is Fe-coproporphyrin III + 2 H2O2 + 2 H(+) = heme b + 2 CO2 + 4 H2O. It carries out the reaction Fe-coproporphyrin III + H2O2 + H(+) = harderoheme III + CO2 + 2 H2O. The enzyme catalyses harderoheme III + H2O2 + H(+) = heme b + CO2 + 2 H2O. It participates in porphyrin-containing compound metabolism; protoheme biosynthesis. Its function is as follows. Involved in coproporphyrin-dependent heme b biosynthesis. Catalyzes the decarboxylation of Fe-coproporphyrin III (coproheme) to heme b (protoheme IX), the last step of the pathway. The reaction occurs in a stepwise manner with a three-propionate intermediate. This chain is Coproheme decarboxylase, found in Bacillus licheniformis (strain ATCC 14580 / DSM 13 / JCM 2505 / CCUG 7422 / NBRC 12200 / NCIMB 9375 / NCTC 10341 / NRRL NRS-1264 / Gibson 46).